Reading from the N-terminus, the 301-residue chain is Probable aspartoacylase (301 aa).

H13 and E16 together coordinate Zn(2+). Residues R54 and 61–62 (NR) contribute to the substrate site. H105 is a binding site for Zn(2+). 2 residues coordinate substrate: E163 and Y273.

The protein belongs to the AspA/AstE family. Aspartoacylase subfamily. Zn(2+) serves as cofactor.

The catalysed reaction is an N-acyl-L-aspartate + H2O = a carboxylate + L-aspartate. This chain is Probable aspartoacylase, found in Prochlorococcus marinus (strain MIT 9301).